The primary structure comprises 96 residues: C-C motif chemokine 20 (96 aa).

An N-terminal signal peptide occupies residues 1-26 (MACKHLPFLALAGVLLAYLCSQSEAA). 2 cysteine pairs are disulfide-bonded: Cys31–Cys58 and Cys32–Cys74.

The protein belongs to the intercrine beta (chemokine CC) family. As to expression, low levels in thymus and lung.

The protein localises to the secreted. Acts as a ligand for C-C chemokine receptor CCR6. Signals through binding and activation of CCR6 and induces a strong chemotactic response and mobilization of intracellular calcium ions. The ligand-receptor pair CCL20-CCR6 is responsible for the chemotaxis of dendritic cells (DC), effector/memory T-cells and B-cells and plays an important role at skin and mucosal surfaces under homeostatic and inflammatory conditions, as well as in pathology, including cancer and autoimmune diseases. CCL20 acts as a chemotactic factor that attracts lymphocytes and, slightly, neutrophils, but not monocytes. Involved in the recruitment of both the pro-inflammatory IL17 producing helper T-cells (Th17) and the regulatory T-cells (Treg) to sites of inflammation. Required for optimal migration of thymic natural regulatory T cells (nTregs) and DN1 early thymocyte progenitor cells. Positively regulates sperm motility and chemotaxis via its binding to CCR6 which triggers Ca2+ mobilization in the sperm which is important for its motility. May be involved in formation and function of the mucosal lymphoid tissues by attracting lymphocytes and dendritic cells towards epithelial cells. The chain is C-C motif chemokine 20 (Ccl20) from Rattus norvegicus (Rat).